A 113-amino-acid chain; its full sequence is Small ribosomal subunit protein bS6 (113 aa).

The protein belongs to the bacterial ribosomal protein bS6 family.

In terms of biological role, binds together with bS18 to 16S ribosomal RNA. This chain is Small ribosomal subunit protein bS6, found in Wigglesworthia glossinidia brevipalpis.